A 1091-amino-acid chain; its full sequence is Isoleucine--tRNA ligase (1091 aa).

The 'HIGH' region signature appears at 48-58 (PFATGLPHFGH). A 'KMSKS' region motif is present at residues 625–629 (KMSKA). Lys628 is a binding site for ATP.

Belongs to the class-I aminoacyl-tRNA synthetase family. IleS type 2 subfamily. In terms of assembly, monomer. Zn(2+) serves as cofactor.

The protein resides in the cytoplasm. The enzyme catalyses tRNA(Ile) + L-isoleucine + ATP = L-isoleucyl-tRNA(Ile) + AMP + diphosphate. Functionally, catalyzes the attachment of isoleucine to tRNA(Ile). As IleRS can inadvertently accommodate and process structurally similar amino acids such as valine, to avoid such errors it has two additional distinct tRNA(Ile)-dependent editing activities. One activity is designated as 'pretransfer' editing and involves the hydrolysis of activated Val-AMP. The other activity is designated 'posttransfer' editing and involves deacylation of mischarged Val-tRNA(Ile). The polypeptide is Isoleucine--tRNA ligase (Treponema pallidum (strain Nichols)).